Consider the following 462-residue polypeptide: Argininosuccinate lyase (462 aa).

This sequence belongs to the lyase 1 family. Argininosuccinate lyase subfamily.

It is found in the cytoplasm. It catalyses the reaction 2-(N(omega)-L-arginino)succinate = fumarate + L-arginine. Its pathway is amino-acid biosynthesis; L-arginine biosynthesis; L-arginine from L-ornithine and carbamoyl phosphate: step 3/3. This Prochlorococcus marinus (strain MIT 9211) protein is Argininosuccinate lyase.